Consider the following 549-residue polypeptide: Acetyl-coenzyme A transporter 1 (549 aa).

The segment covering Met-1 to Arg-12 has biased composition (basic and acidic residues). Residues Met-1 to Glu-46 are disordered. Residues Met-1–Ser-74 lie on the Cytoplasmic side of the membrane. Phosphoserine occurs at positions 22 and 42. The span at Asp-36 to Glu-46 shows a compositional bias: basic and acidic residues. The helical transmembrane segment at Ile-75–Ile-95 threads the bilayer. Over Pro-96–Ser-113 the chain is Extracellular. Asn-103 carries N-linked (GlcNAc...) asparagine glycosylation. A helical transmembrane segment spans residues Phe-114 to Val-134. Over Lys-135–Lys-141 the chain is Cytoplasmic. A helical transmembrane segment spans residues Ser-142–Val-162. Topologically, residues Asp-163–Asp-175 are extracellular. Residues Val-176–Ala-196 form a helical membrane-spanning segment. Residues Val-197–Asn-217 lie on the Cytoplasmic side of the membrane. A helical membrane pass occupies residues Ser-218–Ala-238. Residues Asp-239–Thr-256 lie on the Extracellular side of the membrane. Residues Leu-257–Leu-277 form a helical membrane-spanning segment. At Leu-278–Lys-299 the chain is on the cytoplasmic side. The helical transmembrane segment at Leu-300–Ala-320 threads the bilayer. Over Lys-321 to Glu-343 the chain is Extracellular. The chain crosses the membrane as a helical span at residues His-344–Ser-364. Residues Lys-365 to Lys-378 are Cytoplasmic-facing. The helical transmembrane segment at Ala-379–Pro-398 threads the bilayer. Topologically, residues Lys-399–Gly-404 are extracellular. Residues Gly-405–Val-425 traverse the membrane as a helical segment. At Tyr-426–Asp-508 the chain is on the cytoplasmic side. The chain crosses the membrane as a helical span at residues Gly-509–Gly-529. At Pro-530–Asn-549 the chain is on the extracellular side.

The protein belongs to the SLC33A transporter family. In terms of assembly, homodimerizes. As to expression, ubiquitous. Detected in heart, brain, placenta, lung, liver, skeletal muscle, kidney and pancreas. With strongest signals in pancreas.

Its subcellular location is the endoplasmic reticulum membrane. It catalyses the reaction acetyl-CoA(in) = acetyl-CoA(out). Its function is as follows. Acetyl-CoA transporter that mediates active acetyl-CoA import through the endoplasmic reticulum (ER) membrane into the ER lumen where specific ER-based acetyl-CoA:lysine acetyltransferases are responsible for the acetylation of ER-based protein substrates, such as BACE1. Necessary for O-acetylation of gangliosides. The protein is Acetyl-coenzyme A transporter 1 of Homo sapiens (Human).